We begin with the raw amino-acid sequence, 374 residues long: Glutamate 5-kinase (374 aa).

Lys16 is an ATP binding site. 3 residues coordinate substrate: Ser56, Asp143, and Asn155. Position 175–176 (175–176) interacts with ATP; sequence TD. The region spanning 282–360 is the PUA domain; the sequence is KGCFVVDEGA…TRIEEILGYV (79 aa).

It belongs to the glutamate 5-kinase family.

Its subcellular location is the cytoplasm. The enzyme catalyses L-glutamate + ATP = L-glutamyl 5-phosphate + ADP. It functions in the pathway amino-acid biosynthesis; L-proline biosynthesis; L-glutamate 5-semialdehyde from L-glutamate: step 1/2. Functionally, catalyzes the transfer of a phosphate group to glutamate to form L-glutamate 5-phosphate. In Methylococcus capsulatus (strain ATCC 33009 / NCIMB 11132 / Bath), this protein is Glutamate 5-kinase.